Consider the following 1622-residue polypeptide: WD repeat-containing protein 97 (1622 aa).

WD repeat units follow at residues 187-233 (SEQG…RRLV), 290-329 (LHKT…RMVF), 331-370 (GHTG…QVGE), 552-592 (ELRC…TVFQ), 594-633 (EAHS…EESL), and 687-726 (DPTD…LRLL). 2 disordered regions span residues 1090-1112 (GEKP…EDEE) and 1453-1472 (LHPA…EETD). Positions 1094 to 1118 (GEEGEEDKKEEEEEKEDEELDWALA) form a coiled coil. A compositionally biased stretch (acidic residues) spans 1096–1112 (EGEEDKKEEEEEKEDEE).

The chain is WD repeat-containing protein 97 from Homo sapiens (Human).